The primary structure comprises 155 residues: Putative methyl-CpG-binding domain protein 12 (155 aa).

The segment at Met1 to Thr53 adopts a CW-type zinc-finger fold. Residues Gln3–Cys45 carry the MBD-associated domain (MAD) motif. Residues Cys4, Cys7, Cys33, and Cys45 each contribute to the Zn(2+) site. An MBD domain is found at Thr53 to Pro126. Positions Asn130–Lys155 are disordered. Positions Lys133–Ser144 are enriched in basic residues. Residues Lys140–Asp147 carry the Nuclear localization signal motif. The span at Ser145–Lys155 shows a compositional bias: basic and acidic residues.

Its subcellular location is the nucleus. Functionally, probable transcriptional regulator. This chain is Putative methyl-CpG-binding domain protein 12 (MBD12), found in Arabidopsis thaliana (Mouse-ear cress).